Reading from the N-terminus, the 129-residue chain is MSHLQNLLLDTLLGTKHVDGAALIKLQEKTLCVTSPGFSVMPCDVRTLLNGFAKNPLLTRREGLYFREKDYKCVRADDCSLYAKKENTGVVVVKTHMYLLVATYTAGMYPSVCVEATEKLGEYLRKKGN.

It belongs to the profilin family. As to expression, expressed in testis, in seminiferous tubules (at protein level). Expressed in spermatocytes and spermatids, but not in spermatogonium.

The protein resides in the cytoplasm. Functionally, involved in male fertility. Required for manchette development and acrosome biogenesis during spermiogenesis. Binds in vitro to phospholipids, including phosphatidylinositol 3-phosphate (PtdIns(3)P), phosphatidylinositol 4,5-bisphosphate (PtdIns(4,5)P2), phosphatidylinositol 4-phosphate (PtdIns(4)P) and phosphatidic acid (PA). Contrary to other profilin family members, does not bind to actin in vitro. The protein is Profilin-4 (Pfn4) of Rattus norvegicus (Rat).